The primary structure comprises 118 residues: Small ribosomal subunit protein uS13 (118 aa).

The interval 92–118 (RRGLPVRGQRTKTNARTRKGPRKPIKK) is disordered.

It belongs to the universal ribosomal protein uS13 family. Part of the 30S ribosomal subunit. Forms a loose heterodimer with protein S19. Forms two bridges to the 50S subunit in the 70S ribosome.

In terms of biological role, located at the top of the head of the 30S subunit, it contacts several helices of the 16S rRNA. In the 70S ribosome it contacts the 23S rRNA (bridge B1a) and protein L5 of the 50S subunit (bridge B1b), connecting the 2 subunits; these bridges are implicated in subunit movement. Contacts the tRNAs in the A and P-sites. This is Small ribosomal subunit protein uS13 from Yersinia enterocolitica serotype O:8 / biotype 1B (strain NCTC 13174 / 8081).